A 772-amino-acid polypeptide reads, in one-letter code: U3 small nucleolar RNA-associated protein 25 homolog (772 aa).

The segment at 1 to 179 (MGKRRNRGRS…SEEFTDVKHE (179 aa)) is disordered. Promotes p53/TP53 degradation regions lie at residues 1–201 (MGKR…SQRP) and 589–651 (VQLP…KKEE). Ser-10 bears the Phosphoserine mark. A compositionally biased stretch (basic and acidic residues) spans 25–43 (RDFGEEHPFYDRVSKKEAK). Phosphoserine is present on residues Ser-52, Ser-60, and Ser-64. The span at 54-70 (DSSHSESESESEQEHVS) shows a compositional bias: basic and acidic residues. Positions 84–124 (EEEEEEEEEEEEEEEEEEEEEEEEEDDSAVGDAEMNEEAGS) are enriched in acidic residues. Over residues 127 to 136 (GSVGEAAVSE) the composition is skewed to low complexity. Residues 169–179 (SSEEFTDVKHE) show a composition bias toward basic and acidic residues. Positions 652 to 713 (LNFTHICEYT…YELPTYPHFY (62 aa)) are represses p53/TP53 degradation.

The protein belongs to the UTP25 family. As to quaternary structure, interacts with CAPN3; the interaction is required for CAPN3 translocation to the nucleolus. Phosphorylated. Phosphorylation is required to promote p53/TP53 degradation in the nucleolus which promotes cell cycle progression and liver development. As to expression, expressed in all tissues tested: brain, small intestine, large intestine, stomach, liver, spleen, thymus, lung, kidney and testes (at protein level).

It localises to the nucleus. Its subcellular location is the nucleolus. Component of the ribosomal small subunit processome for the biogenesis of ribosomes, functions in pre-ribosomal RNA (pre-rRNA) processing. Essential for embryonic development in part through the regulation of p53 pathway. Controls the expansion growth of digestive organs and liver. Also involved in the sympathetic neuronal development. Mediates, with CAPN3, the proteasome-independent degradation of p53/TP53. The polypeptide is U3 small nucleolar RNA-associated protein 25 homolog (Mus musculus (Mouse)).